The primary structure comprises 351 residues: Cell shape-determining protein MreB (351 aa).

Residues 20–22, 169–171, 217–220, and 299–302 contribute to the ATP site; these read TAN, GGT, ERIK, and GGAL.

It belongs to the FtsA/MreB family. As to quaternary structure, forms polymers.

The protein localises to the cytoplasm. In terms of biological role, forms membrane-associated dynamic filaments that are essential for cell shape determination. Acts by regulating cell wall synthesis and cell elongation, and thus cell shape. A feedback loop between cell geometry and MreB localization may maintain elongated cell shape by targeting cell wall growth to regions of negative cell wall curvature. This is Cell shape-determining protein MreB from Pasteurella multocida (strain Pm70).